The following is an 822-amino-acid chain: Phenylalanine--tRNA ligase beta subunit (822 aa).

The region spanning 44 to 162 (LSKNTNLVVG…DQIALGSNAL (119 aa)) is the tRNA-binding domain. The disordered stretch occupies residues 201–224 (QSSNNNQETKSTNYKTKNSEDQTN). Residues 430 to 513 (RTNPTISLNL…RLYGCHKLPP (84 aa)) enclose the B5 domain. Asp-491, Asp-497, and Asp-501 together coordinate Mg(2+). An FDX-ACB domain is found at 730-822 (PKFPTVIRDL…LIKHFHIEIR (93 aa)).

The protein belongs to the phenylalanyl-tRNA synthetase beta subunit family. Type 1 subfamily. Tetramer of two alpha and two beta subunits. Mg(2+) serves as cofactor.

The protein resides in the cytoplasm. The enzyme catalyses tRNA(Phe) + L-phenylalanine + ATP = L-phenylalanyl-tRNA(Phe) + AMP + diphosphate + H(+). The sequence is that of Phenylalanine--tRNA ligase beta subunit from Onion yellows phytoplasma (strain OY-M).